The following is a 115-amino-acid chain: Large ribosomal subunit protein bL19 (115 aa).

It belongs to the bacterial ribosomal protein bL19 family.

Functionally, this protein is located at the 30S-50S ribosomal subunit interface and may play a role in the structure and function of the aminoacyl-tRNA binding site. The sequence is that of Large ribosomal subunit protein bL19 from Lachnospira eligens (strain ATCC 27750 / DSM 3376 / VPI C15-48 / C15-B4) (Eubacterium eligens).